The primary structure comprises 145 residues: Transcription antitermination protein NusB (145 aa).

Belongs to the NusB family.

In terms of biological role, involved in transcription antitermination. Required for transcription of ribosomal RNA (rRNA) genes. Binds specifically to the boxA antiterminator sequence of the ribosomal RNA (rrn) operons. The sequence is that of Transcription antitermination protein NusB from Burkholderia lata (strain ATCC 17760 / DSM 23089 / LMG 22485 / NCIMB 9086 / R18194 / 383).